A 463-amino-acid chain; its full sequence is MGKVPSSFRSMPANLLVRKTTPSPPAPPRDFRNRTAVGGDSAKLPQNTQAPREPSLRNPFKSPNLSDAKSLFNSIAATSRIPLDLKFHNSVLQSYGSIAVVNDTVKLFQHILKSQPNFRPGRSTFLILLSHACRAPDSSISNVHRVLNLMVNNGLEPDQVTTDIAVRSLCETGRVDEAKDLMKELTEKHSPPDTYTYNFLLKHLCKCKDLHVVYEFVDEMRDDFDVKPDLVSFTILIDNVCNSKNLREAMYLVSKLGNAGFKPDCFLYNTIMKGFCTLSKGSEAVGVYKKMKEEGVEPDQITYNTLIFGLSKAGRVEEARMYLKTMVDAGYEPDTATYTSLMNGMCRKGESLGALSLLEEMEARGCAPNDCTYNTLLHGLCKARLMDKGMELYEMMKSSGVKLESNGYATLVRSLVKSGKVAEAYEVFDYAVDSKSLSDASAYSTLETTLKWLKKAKEQGLVP.

Residues 1–63 form a disordered region; that stretch reads MGKVPSSFRS…PSLRNPFKSP (63 aa). 9 PPR repeats span residues 121 to 157, 158 to 192, 193 to 223, 229 to 263, 264 to 298, 299 to 333, 334 to 368, 369 to 403, and 404 to 438; these read GRSTFLILLSHACRAPDSSISNVHRVLNLMVNNGLEP, DQVTTDIAVRSLCETGRVDEAKDLMKELTEKHSPP, DTYTYNFLLKHLCKCKDLHVVYEFVDEMRDD, DLVSFTILIDNVCNSKNLREAMYLVSKLGNAGFKP, DCFLYNTIMKGFCTLSKGSEAVGVYKKMKEEGVEP, DQITYNTLIFGLSKAGRVEEARMYLKTMVDAGYEP, DTATYTSLMNGMCRKGESLGALSLLEEMEARGCAP, NDCTYNTLLHGLCKARLMDKGMELYEMMKSSGVKL, and ESNGYATLVRSLVKSGKVAEAYEVFDYAVDSKSLS.

It belongs to the PPR family. P subfamily.

The polypeptide is Pentatricopeptide repeat-containing protein At2g17670 (Arabidopsis thaliana (Mouse-ear cress)).